The primary structure comprises 199 residues: Protein PPP1R35 homolog (199 aa).

Residues 1–11 show a composition bias toward basic residues; the sequence is MPHKRRNRVHA. Disordered stretches follow at residues 1–23 and 36–60; these read MPHK…RVSV and ESCN…AMTN. Positions 38–49 are enriched in polar residues; sequence CNGSHADNSSPD.

It belongs to the PPP1R35 family. In terms of assembly, interacts with Ana3; this complex is recruited to daughter centrioles before their conversion to centrosomes.

It localises to the cytoplasm. The protein localises to the cytoskeleton. Its subcellular location is the microtubule organizing center. It is found in the centrosome. The protein resides in the centriole. Functionally, participates in the later stages of centriole assembly through the interaction with Ana3 leading to the centriole to centrosome conversion in somatic cells. The polypeptide is Protein PPP1R35 homolog (Drosophila melanogaster (Fruit fly)).